The sequence spans 466 residues: Glutamate--tRNA ligase (466 aa).

A 'HIGH' region motif is present at residues 10–20 (PSPTGYLHVGG). Zn(2+)-binding residues include Cys-99, Cys-101, Cys-126, and Asp-128. A 'KMSKS' region motif is present at residues 237-241 (RLSKR). Lys-240 is a binding site for ATP.

This sequence belongs to the class-I aminoacyl-tRNA synthetase family. Glutamate--tRNA ligase type 1 subfamily. Monomer. It depends on Zn(2+) as a cofactor.

The protein localises to the cytoplasm. It carries out the reaction tRNA(Glu) + L-glutamate + ATP = L-glutamyl-tRNA(Glu) + AMP + diphosphate. In terms of biological role, catalyzes the attachment of glutamate to tRNA(Glu) in a two-step reaction: glutamate is first activated by ATP to form Glu-AMP and then transferred to the acceptor end of tRNA(Glu). The polypeptide is Glutamate--tRNA ligase (Geobacter sulfurreducens (strain ATCC 51573 / DSM 12127 / PCA)).